The following is a 418-amino-acid chain: Putative competence-damage inducible protein (418 aa).

Belongs to the CinA family.

The polypeptide is Putative competence-damage inducible protein (Streptococcus pneumoniae serotype 2 (strain D39 / NCTC 7466)).